The chain runs to 152 residues: MELNTLKPAKNSVKQNTRYGRGQGSGKGGTSTRGHKGAKSRSGYKSKPGFEGGQLPLQRRLPMYGFKNPNRVSYKPINLDTIQQLAEKAQLTVINPEVLHQHGLVSKRDKCKILGNGLLKTKLEVTAHAFSASASAAIEKLGGKANILNIYA.

Positions 1–56 (MELNTLKPAKNSVKQNTRYGRGQGSGKGGTSTRGHKGAKSRSGYKSKPGFEGGQLP) are disordered. A compositionally biased stretch (gly residues) spans 21 to 31 (RGQGSGKGGTS). A compositionally biased stretch (basic residues) spans 33–44 (RGHKGAKSRSGY).

Belongs to the universal ribosomal protein uL15 family. In terms of assembly, part of the 50S ribosomal subunit.

Functionally, binds to the 23S rRNA. This chain is Large ribosomal subunit protein uL15, found in Amoebophilus asiaticus (strain 5a2).